A 166-amino-acid polypeptide reads, in one-letter code: Urease accessory protein UreE (166 aa).

The interval 133 to 154 (QPEHGAYGGGHHHSRHGDEDFN) is disordered.

The protein belongs to the UreE family.

The protein resides in the cytoplasm. Its function is as follows. Involved in urease metallocenter assembly. Binds nickel. Probably functions as a nickel donor during metallocenter assembly. The sequence is that of Urease accessory protein UreE from Pseudomonas fluorescens (strain SBW25).